The chain runs to 297 residues: Large ribosomal subunit protein uL15m (297 aa).

Residues methionine 1–lysine 21 constitute a mitochondrion transit peptide. Residues serine 23–glutamate 69 form a disordered region. Positions proline 36–glycine 53 are enriched in basic residues.

This sequence belongs to the universal ribosomal protein uL15 family. Component of the mitochondrial ribosome large subunit (39S) which comprises a 16S rRNA and about 50 distinct proteins.

It localises to the mitochondrion. This Gallus gallus (Chicken) protein is Large ribosomal subunit protein uL15m (MRPL15).